A 204-amino-acid polypeptide reads, in one-letter code: ADP-ribosylation factor-like protein 15 (204 aa).

Residues 39 to 46 (GLTGSGKT), 82 to 86 (ELGGA), and 142 to 145 (NHQD) contribute to the GTP site.

The protein belongs to the small GTPase superfamily. Arf family.

In Mus musculus (Mouse), this protein is ADP-ribosylation factor-like protein 15 (Arl15).